The chain runs to 101 residues: Small ribosomal subunit protein bS18c (101 aa).

Belongs to the bacterial ribosomal protein bS18 family. As to quaternary structure, part of the 30S ribosomal subunit.

It is found in the plastid. It localises to the chloroplast. In Solanum bulbocastanum (Wild potato), this protein is Small ribosomal subunit protein bS18c.